The primary structure comprises 162 residues: NADH-quinone oxidoreductase subunit I (162 aa).

2 consecutive 4Fe-4S ferredoxin-type domains span residues 53-83 (LRRY…IESE) and 93-122 (TRYD…EGPN). [4Fe-4S] cluster-binding residues include cysteine 63, cysteine 66, cysteine 69, cysteine 73, cysteine 102, cysteine 105, cysteine 108, and cysteine 112.

Belongs to the complex I 23 kDa subunit family. NDH-1 is composed of 14 different subunits. Subunits NuoA, H, J, K, L, M, N constitute the membrane sector of the complex. Requires [4Fe-4S] cluster as cofactor.

Its subcellular location is the cell inner membrane. It catalyses the reaction a quinone + NADH + 5 H(+)(in) = a quinol + NAD(+) + 4 H(+)(out). In terms of biological role, NDH-1 shuttles electrons from NADH, via FMN and iron-sulfur (Fe-S) centers, to quinones in the respiratory chain. The immediate electron acceptor for the enzyme in this species is believed to be ubiquinone. Couples the redox reaction to proton translocation (for every two electrons transferred, four hydrogen ions are translocated across the cytoplasmic membrane), and thus conserves the redox energy in a proton gradient. This chain is NADH-quinone oxidoreductase subunit I, found in Erythrobacter litoralis (strain HTCC2594).